A 465-amino-acid polypeptide reads, in one-letter code: E3 ubiquitin-protein ligase parkin (465 aa).

Positions 1–76 (MIVFVRFNSS…VHIVQRPWRK (76 aa)) constitute a Ubiquitin-like domain. Ser-65 carries the post-translational modification Phosphoserine; by PINK1. A disordered region spans residues 77–99 (GQEMNATGGDDPRNAAGGCEREP). The necessary for PINK1-dependent localization to mitochondria stretch occupies residues 77–237 (GQEMNATGGD…LIATNSRNIT (161 aa)). Residues 141 to 225 (SIYNSFYVYC…PTSDKETSVA (85 aa)) form an RING-type 0; atypical zinc finger. Residue Thr-175 is modified to Phosphothreonine; by PINK1. An SYT11 binding 1 region spans residues 204-238 (TSAEFFFKCGAHPTSDKETSVALHLIATNSRNITC). The residue at position 217 (Thr-217) is a Phosphothreonine. The tract at residues 234-465 (RNITCITCTD…VCMGDHWFDV (232 aa)) is TRIAD supradomain. Zn(2+)-binding residues include Cys-238, Cys-241, Cys-253, His-257, Cys-260, Cys-263, Cys-289, Cys-293, Cys-332, and Cys-337. Residues 238-293 (CITCTDVRSPVLVFQCNSRHVICLDCFHLYCVTRLNDRQFVHDPQLGYSLPCVAGC) form an RING-type 1 zinc finger. Residues 257–293 (HVICLDCFHLYCVTRLNDRQFVHDPQLGYSLPCVAGC) form an SYT11 binding 2 region. Residues 313 to 377 (NRYQQYGAEE…CKEAYHEGEC (65 aa)) form an IBR-type zinc finger. Lys-349 is covalently cross-linked (Glycyl lysine isopeptide (Lys-Gly) (interchain with G-Cter in ISG15)). Zn(2+) contacts are provided by Cys-352, Cys-360, Cys-365, and Cys-368. Residue Lys-369 forms a Glycyl lysine isopeptide (Lys-Gly) (interchain with G-Cter in ISG15) linkage. Zn(2+)-binding residues include His-373 and Cys-377. Residues 378–410 (SAVFEASGTTTQAYRVDERAAEQARWEAASKET) form an REP region. Residues Cys-418 and Cys-421 each contribute to the Zn(2+) site. An RING-type 2; atypical zinc finger spans residues 418–449 (CPRCHVPVEKNGGCMHMKCPQPQCRLEWCWNC). Cys-431 is a catalytic residue. Zn(2+)-binding residues include Cys-436, Cys-441, Cys-446, Cys-449, Cys-457, and His-461.

The protein belongs to the RBR family. Parkin subfamily. As to quaternary structure, forms an E3 ubiquitin ligase complex with UBE2L3 or UBE2L6. Mediates 'Lys-63'-linked polyubiquitination by associating with UBE2V1. Part of a SCF-like complex, consisting of PRKN, CUL1 and FBXW7. Interacts with SNCAIP. Binds to the C2A and C2B domains of SYT11. Interacts and regulates the turnover of SEPTIN5. Part of a complex, including STUB1, HSP70 and GPR37. The amount of STUB1 in the complex increases during ER stress. STUB1 promotes the dissociation of HSP70 from PRKN and GPR37, thus facilitating PRKN-mediated GPR37 ubiquitination. HSP70 transiently associates with unfolded GPR37 and inhibits the E3 activity of PRKN, whereas, STUB1 enhances the E3 activity of PRKN through promotion of dissociation of HSP70 from PRKN-GPR37 complexes. Interacts with PSMD4 and PACRG. Interacts with LRRK2. Interacts with RANBP2. Interacts with SUMO1 but not SUMO2, which promotes nuclear localization and autoubiquitination. Interacts (via first RING-type domain) with AIMP2 (via N-terminus). Interacts with PSMA7 and RNF41. Interacts with PINK1. Forms a complex with PINK1 and PARK7. Interacts with CHPF, the interaction with isoform 2 may facilitate PRKN transport into the mitochondria. Interacts with MFN2 (phosphorylated), promotes PRKN localization in dysfunctional depolarized mitochondria. Interacts with FBXO7; this promotes translocation to dysfunctional depolarized mitochondria. Interacts with ZNF746. Interacts with heat shock protein 70 family members, including HSPA1L, HSPA1A and HSPA8; interaction HSPA1L promotes translocation to damaged mitochondria. Interacts with BAG4 and, to a lesser extent, BAG5; interaction with BAG4 inhibits translocation to damaged mitochondria. Forms a complex with PRKN and PARK7. Interacts with AMBRA1. ISGylated. Conjugated to ubiquitin-like protein ISG15 upon IFN-beta stimulation. ISGylation positively regulates its E3 ligase activity. Post-translationally, auto-ubiquitinates in an E2-dependent manner leading to its own degradation. Also polyubiquitinated by RNF41 for proteasomal degradation. In terms of processing, S-nitrosylated. The inhibition of PRKN ubiquitin E3 ligase activity by S-nitrosylation could contribute to the degenerative process in PD by impairing the ubiquitination of PRKN substrates. Phosphorylated. Activation requires phosphorylation at Ser-65 by PINK1 and binding to PINK1 phosphorylated ubiquitin. Phosphorylation at Thr-175 by PINK1 and at Thr-217 is important for mitochondrial localization. As to expression, highly expressed in the brain including the substantia nigra. Expressed in heart, testis and skeletal muscle. Expression is down-regulated or absent in tumor biopsies, and absent in the brain of PARK2 patients. Overexpression protects dopamine neurons from kainate-mediated apoptosis. Found in serum (at protein level).

The protein resides in the cytoplasm. It is found in the cytosol. It localises to the nucleus. The protein localises to the endoplasmic reticulum. Its subcellular location is the mitochondrion. The protein resides in the mitochondrion outer membrane. It is found in the cell projection. It localises to the neuron projection. The protein localises to the postsynaptic density. Its subcellular location is the presynapse. The catalysed reaction is [E2 ubiquitin-conjugating enzyme]-S-ubiquitinyl-L-cysteine + [acceptor protein]-L-lysine = [E2 ubiquitin-conjugating enzyme]-L-cysteine + [acceptor protein]-N(6)-ubiquitinyl-L-lysine.. It participates in protein modification; protein ubiquitination. In the autoinhibited state the side chain of Phe-463 inserts into a hydrophobic groove in RING-0, occluding the ubiquitin acceptor site Cys-431, whereas the REP repressor element binds RING-1 and blocks its E2-binding site. Activation of PRKN requires 2 steps: (1) phosphorylation at Ser-65 by PINK1 and (2) binding to phosphorylated ubiquitin, leading to unlock repression of the catalytic Cys-431 by the RING-0 region via an allosteric mechanism and converting PRKN to its fully-active form. According to another report, phosphorylation at Ser-65 by PINK1 is not essential for activation and only binding to phosphorylated ubiquitin is essential to unlock repression. In addition, ISG15 conjugation positively regulates its ubiquitin E3 ligase activity by suppressing the intramolecular interaction that maintains its autoinhibited conformation. Its function is as follows. Functions within a multiprotein E3 ubiquitin ligase complex, catalyzing the covalent attachment of ubiquitin moieties onto substrate proteins. Substrates include SYT11 and VDAC1. Other substrates are BCL2, CCNE1, GPR37, RHOT1/MIRO1, MFN1, MFN2, STUB1, SNCAIP, SEPTIN5, TOMM20, USP30, ZNF746, MIRO1 and AIMP2. Mediates monoubiquitination as well as 'Lys-6', 'Lys-11', 'Lys-48'-linked and 'Lys-63'-linked polyubiquitination of substrates depending on the context. Participates in the removal and/or detoxification of abnormally folded or damaged protein by mediating 'Lys-63'-linked polyubiquitination of misfolded proteins such as PARK7: 'Lys-63'-linked polyubiquitinated misfolded proteins are then recognized by HDAC6, leading to their recruitment to aggresomes, followed by degradation. Mediates 'Lys-63'-linked polyubiquitination of a 22 kDa O-linked glycosylated isoform of SNCAIP, possibly playing a role in Lewy-body formation. Mediates monoubiquitination of BCL2, thereby acting as a positive regulator of autophagy. Protects against mitochondrial dysfunction during cellular stress, by acting downstream of PINK1 to coordinate mitochondrial quality control mechanisms that remove and replace dysfunctional mitochondrial components. Depending on the severity of mitochondrial damage and/or dysfunction, activity ranges from preventing apoptosis and stimulating mitochondrial biogenesis to regulating mitochondrial dynamics and eliminating severely damaged mitochondria via mitophagy. Activation and recruitment onto the outer membrane of damaged/dysfunctional mitochondria (OMM) requires PINK1-mediated phosphorylation of both PRKN and ubiquitin. After mitochondrial damage, functions with PINK1 to mediate the decision between mitophagy or preventing apoptosis by inducing either the poly- or monoubiquitination of VDAC1, respectively; polyubiquitination of VDAC1 promotes mitophagy, while monoubiquitination of VDAC1 decreases mitochondrial calcium influx which ultimately inhibits apoptosis. When cellular stress results in irreversible mitochondrial damage, promotes the autophagic degradation of dysfunctional depolarized mitochondria (mitophagy) by promoting the ubiquitination of mitochondrial proteins such as TOMM20, RHOT1/MIRO1, MFN1 and USP30. Preferentially assembles 'Lys-6'-, 'Lys-11'- and 'Lys-63'-linked polyubiquitin chains, leading to mitophagy. The PINK1-PRKN pathway also promotes fission of damaged mitochondria by PINK1-mediated phosphorylation which promotes the PRKN-dependent degradation of mitochondrial proteins involved in fission such as MFN2. This prevents the refusion of unhealthy mitochondria with the mitochondrial network or initiates mitochondrial fragmentation facilitating their later engulfment by autophagosomes. Regulates motility of damaged mitochondria via the ubiquitination and subsequent degradation of MIRO1 and MIRO2; in motor neurons, this likely inhibits mitochondrial intracellular anterograde transport along the axons which probably increases the chance of the mitochondria undergoing mitophagy in the soma. Involved in mitochondrial biogenesis via the 'Lys-48'-linked polyubiquitination of transcriptional repressor ZNF746/PARIS which leads to its subsequent proteasomal degradation and allows activation of the transcription factor PPARGC1A. Limits the production of reactive oxygen species (ROS). Regulates cyclin-E during neuronal apoptosis. In collaboration with CHPF isoform 2, may enhance cell viability and protect cells from oxidative stress. Independently of its ubiquitin ligase activity, protects from apoptosis by the transcriptional repression of p53/TP53. May protect neurons against alpha synuclein toxicity, proteasomal dysfunction, GPR37 accumulation, and kainate-induced excitotoxicity. May play a role in controlling neurotransmitter trafficking at the presynaptic terminal and in calcium-dependent exocytosis. May represent a tumor suppressor gene. The protein is E3 ubiquitin-protein ligase parkin of Homo sapiens (Human).